Here is a 511-residue protein sequence, read N- to C-terminus: N-acetylgalactosamine-6-O-sulfatase (511 aa).

The residue at position 83 (Ser-83) is a 3-oxoalanine (Ser).

Belongs to the sulfatase family. The conversion to 3-oxoalanine (also known as C-formylglycine, FGly), of a serine or cysteine residue in prokaryotes and of a cysteine residue in eukaryotes, is critical for catalytic activity.

Functionally, exosulfatase involved in the degradation of the glycosaminoglycans (GAGs) chondroitin sulfate (CS) and dermatan sulfate (DS). Catalyzes the hydrolysis of the 6-sulfate groups of the N-acetyl-D-galactosamine 6-sulfate units. GAG-specific sulfatases play a key role in the persistence of the major human gut symbiont B.thetaiotaomicron in the host gastrointestinal tract. The chain is N-acetylgalactosamine-6-O-sulfatase from Bacteroides thetaiotaomicron (strain ATCC 29148 / DSM 2079 / JCM 5827 / CCUG 10774 / NCTC 10582 / VPI-5482 / E50).